The chain runs to 549 residues: Speedy protein E3 (549 aa).

A compositionally biased stretch (low complexity) spans 1-15 (MTSHQPQPQEEQSPQ). Disordered stretches follow at residues 1-74 (MTSH…EPEE), 126-145 (KRECLDESDDEPEKELAPEP), 188-218 (SPPRRSLGCKRKRECLDESDDEPEKELAPEP), 261-291 (SPPRRSLGCKRKRECLDESDDEPEKELAPEP), and 334-364 (SPPRRSLGCKRKRECLDESDDEPEKELAPEP). Acidic residues-rich tracts occupy residues 58-74 (DESDDEPEKELAPEPEE), 131-145 (DESDDEPEKELAPEP), 204-218 (DESDDEPEKELAPEP), 277-291 (DESDDEPEKELAPEP), and 350-364 (DESDDEPEKELAPEP).

Belongs to the Speedy/Ringo family. Predominantly expressed in testis and spleen.

The polypeptide is Speedy protein E3 (Homo sapiens (Human)).